A 210-amino-acid polypeptide reads, in one-letter code: Probable GTP-binding protein EngB (210 aa).

Residues glutamine 30–leucine 204 enclose the EngB-type G domain. GTP-binding positions include glycine 38 to serine 45, glycine 64 to leucine 68, aspartate 82 to glycine 85, threonine 149 to aspartate 152, and leucine 182 to alanine 185. Mg(2+) contacts are provided by serine 45 and threonine 66.

It belongs to the TRAFAC class TrmE-Era-EngA-EngB-Septin-like GTPase superfamily. EngB GTPase family. It depends on Mg(2+) as a cofactor.

Necessary for normal cell division and for the maintenance of normal septation. This Pseudomonas putida (strain W619) protein is Probable GTP-binding protein EngB.